A 182-amino-acid chain; its full sequence is Thymidine kinase (182 aa).

Position 8-15 (8-15) interacts with ATP; sequence GPMFSGKT. Residue Glu-85 is the Proton acceptor of the active site. A substrate-binding site is contributed by Phe-117. Zn(2+)-binding residues include Cys-142 and Cys-145. 161–165 serves as a coordination point for substrate; it reads IIEIG. Zn(2+) contacts are provided by Cys-174 and Cys-177.

Belongs to the thymidine kinase family.

The enzyme catalyses thymidine + ATP = dTMP + ADP + H(+). This chain is Thymidine kinase (TK), found in Amsacta moorei entomopoxvirus (AmEPV).